A 64-amino-acid polypeptide reads, in one-letter code: Beta-defensin 5 (64 aa).

An N-terminal signal peptide occupies residues 1 to 22 (MRLHHLLLVLLFLVLSAGSGFT). At Q23 the chain carries Pyrrolidone carboxylic acid. 3 disulfides stabilise this stretch: C31/C60, C38/C53, and C43/C61.

This sequence belongs to the beta-defensin family. Neutrophilic granules. Alveolar macrophages.

The protein localises to the secreted. Functionally, has bactericidal activity. Active against E.coli ML35 but not against S.aureus 502A. The polypeptide is Beta-defensin 5 (DEFB5) (Bos taurus (Bovine)).